The sequence spans 140 residues: ATP synthase epsilon chain (140 aa).

Belongs to the ATPase epsilon chain family. F-type ATPases have 2 components, CF(1) - the catalytic core - and CF(0) - the membrane proton channel. CF(1) has five subunits: alpha(3), beta(3), gamma(1), delta(1), epsilon(1). CF(0) has three main subunits: a, b and c.

The protein resides in the cell inner membrane. Produces ATP from ADP in the presence of a proton gradient across the membrane. In Alkalilimnicola ehrlichii (strain ATCC BAA-1101 / DSM 17681 / MLHE-1), this protein is ATP synthase epsilon chain.